Consider the following 111-residue polypeptide: Large ribosomal subunit protein eL42 (111 aa).

The Zn(2+) site is built by Cys-12, Cys-15, Cys-72, and Cys-77.

This sequence belongs to the eukaryotic ribosomal protein eL42 family. As to quaternary structure, component of the large ribosomal subunit.

The protein resides in the cytoplasm. Functionally, component of the large ribosomal subunit. The ribosome is a large ribonucleoprotein complex responsible for the synthesis of proteins in the cell. The sequence is that of Large ribosomal subunit protein eL42 (RPL36A) from Oryctolagus cuniculus (Rabbit).